The following is a 120-amino-acid chain: Ribosome-binding factor A (120 aa).

Belongs to the RbfA family. As to quaternary structure, monomer. Binds 30S ribosomal subunits, but not 50S ribosomal subunits or 70S ribosomes.

It localises to the cytoplasm. One of several proteins that assist in the late maturation steps of the functional core of the 30S ribosomal subunit. Associates with free 30S ribosomal subunits (but not with 30S subunits that are part of 70S ribosomes or polysomes). Required for efficient processing of 16S rRNA. May interact with the 5'-terminal helix region of 16S rRNA. The sequence is that of Ribosome-binding factor A from Chlorobaculum tepidum (strain ATCC 49652 / DSM 12025 / NBRC 103806 / TLS) (Chlorobium tepidum).